A 610-amino-acid polypeptide reads, in one-letter code: Nuclear factor 7, ovary (610 aa).

The region spanning 21–75 (NVGSTYPCKRSDGSQHDADIVKTRYNKQAGREEYYVHYVGLNRRQNEWVDKSRLV) is the Tudor-knot domain. The disordered stretch occupies residues 79 to 127 (PPKEVETNGTDQEEMTEPTEQPDSKTPQKRKLEEPEPEPKKAKVEDKDA). Thr-104 is modified (phosphothreonine; by CDK1). Positions 108-127 (RKLEEPEPEPKKAKVEDKDA) are enriched in basic and acidic residues. The RING-type zinc finger occupies 146–186 (CPLCVELFKDPVMVACGHNFCRSCIDKVWEGQSSFACPECK). A B box-type zinc finger spans residues 220–261 (RPLEKCSEHDERLKLYCKDDGTLGCVICRDSLKHASHNFLPI). Residues Cys-225, His-228, Cys-247, and His-253 each coordinate Zn(2+). Residues 295–374 (DKIEQHNKNV…AKERMEETDS (80 aa)) are a coiled coil. Residues 415 to 610 (PIQYIMWKEL…VDALRFVHNQ (196 aa)) enclose the B30.2/SPRY domain.

In terms of assembly, monomer. Abundant in oocytes. At the neurula stage, low expression in dorsal embryo region including neural folds and somites.

It is found in the nucleus. Functionally, transcription factor that determines dorsal-ventral body axis. This is Nuclear factor 7, ovary from Xenopus laevis (African clawed frog).